Consider the following 555-residue polypeptide: Chaperonin GroEL (555 aa).

Residues 29-32 (TLGP), K50, 86-90 (DGTTT), G418, and D499 contribute to the ATP site. Residues 528-555 (HEEDNNTGNRSGGGVGGGHHGGMGGMDF) form a disordered region. Gly residues predominate over residues 537 to 555 (RSGGGVGGGHHGGMGGMDF).

The protein belongs to the chaperonin (HSP60) family. Forms a cylinder of 14 subunits composed of two heptameric rings stacked back-to-back. Interacts with the co-chaperonin GroES.

The protein localises to the cytoplasm. The enzyme catalyses ATP + H2O + a folded polypeptide = ADP + phosphate + an unfolded polypeptide.. In terms of biological role, together with its co-chaperonin GroES, plays an essential role in assisting protein folding. The GroEL-GroES system forms a nano-cage that allows encapsulation of the non-native substrate proteins and provides a physical environment optimized to promote and accelerate protein folding. This chain is Chaperonin GroEL, found in Orientia tsutsugamushi (Rickettsia tsutsugamushi).